The sequence spans 343 residues: N-acetyl-gamma-glutamyl-phosphate reductase (343 aa).

C147 is an active-site residue.

Belongs to the NAGSA dehydrogenase family. Type 1 subfamily.

The protein resides in the cytoplasm. It carries out the reaction N-acetyl-L-glutamate 5-semialdehyde + phosphate + NADP(+) = N-acetyl-L-glutamyl 5-phosphate + NADPH + H(+). The protein operates within amino-acid biosynthesis; L-arginine biosynthesis; N(2)-acetyl-L-ornithine from L-glutamate: step 3/4. Its function is as follows. Catalyzes the NADPH-dependent reduction of N-acetyl-5-glutamyl phosphate to yield N-acetyl-L-glutamate 5-semialdehyde. The chain is N-acetyl-gamma-glutamyl-phosphate reductase from Listeria monocytogenes serotype 4b (strain CLIP80459).